The chain runs to 491 residues: Xaa-Pro aminopeptidase 1 (491 aa).

Residues 1–32 (MAEELTPENPAIPETPEETEEPIKQRKNGLYP) are disordered. Residues Asp308, Asp320, His403, Glu434, and Glu458 each coordinate Mn(2+).

The protein belongs to the peptidase M24B family. Homodimer. It depends on Mn(2+) as a cofactor.

The enzyme catalyses Release of any N-terminal amino acid, including proline, that is linked to proline, even from a dipeptide or tripeptide.. The chain is Xaa-Pro aminopeptidase 1 (pepPI) from Streptomyces coelicolor (strain ATCC BAA-471 / A3(2) / M145).